The primary structure comprises 123 residues: WAP four-disulfide core domain protein 5 (123 aa).

A signal peptide spans 1–24; it reads MRIQSLLLLGALLAVGSQLPAVFG. WAP domains lie at 27–73 and 74–121; these read KGEK…CVPR and VSVK…RDPA. 8 cysteine pairs are disulfide-bonded: Cys34-Cys62, Cys41-Cys66, Cys49-Cys61, Cys55-Cys70, Cys81-Cys109, Cys88-Cys113, Cys96-Cys108, and Cys102-Cys117.

Its subcellular location is the secreted. Functionally, putative acid-stable proteinase inhibitor. This is WAP four-disulfide core domain protein 5 (WFDC5) from Pongo abelii (Sumatran orangutan).